Here is a 286-residue protein sequence, read N- to C-terminus: Shikimate dehydrogenase (NADP(+)) (286 aa).

Shikimate contacts are provided by residues 22–24 (SFS) and threonine 69. Lysine 73 serves as the catalytic Proton acceptor. Position 85 (glutamate 85) interacts with NADP(+). Positions 94 and 109 each coordinate shikimate. NADP(+)-binding positions include 133–137 (GAGGA), 157–162 (NRTIDK), and leucine 231. Residue tyrosine 233 participates in shikimate binding. Glycine 254 lines the NADP(+) pocket.

The protein belongs to the shikimate dehydrogenase family. As to quaternary structure, homodimer.

It catalyses the reaction shikimate + NADP(+) = 3-dehydroshikimate + NADPH + H(+). The protein operates within metabolic intermediate biosynthesis; chorismate biosynthesis; chorismate from D-erythrose 4-phosphate and phosphoenolpyruvate: step 4/7. Involved in the biosynthesis of the chorismate, which leads to the biosynthesis of aromatic amino acids. Catalyzes the reversible NADPH linked reduction of 3-dehydroshikimate (DHSA) to yield shikimate (SA). This is Shikimate dehydrogenase (NADP(+)) from Alkaliphilus oremlandii (strain OhILAs) (Clostridium oremlandii (strain OhILAs)).